We begin with the raw amino-acid sequence, 60 residues long: MFDSSIERVTLELCFHITLSIMCGCSIYFLLLVFILTFYSSVLLHLKLYFFSSDRAIFNA.

A helical membrane pass occupies residues 19-39 (LSIMCGCSIYFLLLVFILTFY).

It is found in the membrane. This is an uncharacterized protein from Saccharomyces cerevisiae (strain ATCC 204508 / S288c) (Baker's yeast).